The following is a 336-amino-acid chain: Small ribosomal subunit protein RACK1y (336 aa).

7 WD repeats span residues Gly15–Ala55, Gly74–Arg113, Gly116–Ile155, Gly164–Lys205, Gly208–Lys247, Asp249–Asp287, and Ser297–Ile336.

The protein belongs to the WD repeat G protein beta family. Ribosomal protein RACK1 subfamily. Homodimer and heterodimer with RACK1A.

In terms of biological role, component of the RACK1 regulatory proteins that play a role in multiple signal transduction pathways. This Oryza sativa subsp. japonica (Rice) protein is Small ribosomal subunit protein RACK1y (RACK1B).